We begin with the raw amino-acid sequence, 281 residues long: Aldo-keto reductase MAP_3007 (281 aa).

The active-site Proton donor is Tyr56. Leu196, Ile234, Arg236, Ser237, Ala238, Ser245, and Arg272 together coordinate NADPH.

It belongs to the aldo/keto reductase family.

The protein is Aldo-keto reductase MAP_3007 of Mycolicibacterium paratuberculosis (strain ATCC BAA-968 / K-10) (Mycobacterium paratuberculosis).